We begin with the raw amino-acid sequence, 465 residues long: Anthocyanidin 3-O-glucosyltransferase 2 (465 aa).

His-22 acts as the Proton acceptor in catalysis. His-22 and Gln-87 together coordinate an anthocyanidin. Asp-122 serves as the catalytic Charge relay. Thr-145 is a binding site for UDP-alpha-D-glucose. His-154 contacts an anthocyanidin. UDP-alpha-D-glucose-binding residues include Ala-345, Gln-347, His-362, Trp-365, Asn-366, Ser-367, and Glu-370. Residue Gly-385 participates in an anthocyanidin binding. Positions 386 and 387 each coordinate UDP-alpha-D-glucose.

This sequence belongs to the UDP-glycosyltransferase family. In terms of tissue distribution, highest expression detected in fruit, with very low levels detected in petal and leaf.

It carries out the reaction an anthocyanidin + UDP-alpha-D-glucose + H(+) = an anthocyanidin 3-O-beta-D-glucoside + UDP. The catalysed reaction is pelargonidin + UDP-alpha-D-glucose = pelargonidin 3-O-beta-D-glucoside + UDP. It catalyses the reaction cyanidin + UDP-alpha-D-glucose = cyanidin 3-O-beta-D-glucoside + UDP + H(+). Its pathway is pigment biosynthesis; anthocyanin biosynthesis. In the presence of other necessary color factors, this glycosylation reaction allows the accumulation of anthocyanin pigments. Anthocyanidins are the preferred substrates, while flavonols are only a minor substrate in vitro. This Fragaria ananassa (Strawberry) protein is Anthocyanidin 3-O-glucosyltransferase 2.